A 62-amino-acid chain; its full sequence is Cobrotoxin II (62 aa).

The span at 1 to 16 shows a compositional bias: polar residues; sequence LECHNQQSSQTPTTTG. The disordered stretch occupies residues 1-23; that stretch reads LECHNQQSSQTPTTTGCSGGENN. 4 disulfides stabilise this stretch: Cys-3/Cys-24, Cys-17/Cys-41, Cys-43/Cys-54, and Cys-55/Cys-60.

The protein belongs to the three-finger toxin family. Short-chain subfamily. Type I alpha-neurotoxin sub-subfamily. As to expression, expressed by the venom gland.

The protein localises to the secreted. Functionally, binds to muscle nicotinic acetylcholine receptor (nAChR) and inhibit acetylcholine from binding to the receptor, thereby impairing neuromuscular transmission. In Naja kaouthia (Monocled cobra), this protein is Cobrotoxin II.